Consider the following 383-residue polypeptide: Succinyl-diaminopimelate desuccinylase (383 aa).

H74 serves as a coordination point for Zn(2+). D76 is an active-site residue. D107 provides a ligand contact to Zn(2+). The active-site Proton acceptor is E141. Zn(2+) contacts are provided by E142, E170, and H356.

This sequence belongs to the peptidase M20A family. DapE subfamily. Homodimer. The cofactor is Zn(2+). Co(2+) is required as a cofactor.

The enzyme catalyses N-succinyl-(2S,6S)-2,6-diaminopimelate + H2O = (2S,6S)-2,6-diaminopimelate + succinate. It participates in amino-acid biosynthesis; L-lysine biosynthesis via DAP pathway; LL-2,6-diaminopimelate from (S)-tetrahydrodipicolinate (succinylase route): step 3/3. Its function is as follows. Catalyzes the hydrolysis of N-succinyl-L,L-diaminopimelic acid (SDAP), forming succinate and LL-2,6-diaminopimelate (DAP), an intermediate involved in the bacterial biosynthesis of lysine and meso-diaminopimelic acid, an essential component of bacterial cell walls. This chain is Succinyl-diaminopimelate desuccinylase, found in Cupriavidus necator (strain ATCC 17699 / DSM 428 / KCTC 22496 / NCIMB 10442 / H16 / Stanier 337) (Ralstonia eutropha).